A 161-amino-acid polypeptide reads, in one-letter code: Regulator of ribonuclease activity A (161 aa).

The protein belongs to the RraA family. In terms of assembly, homotrimer. Binds to both RNA-binding sites in the C-terminal region of Rne and to RhlB.

Its subcellular location is the cytoplasm. In terms of biological role, globally modulates RNA abundance by binding to RNase E (Rne) and regulating its endonucleolytic activity. Can modulate Rne action in a substrate-dependent manner by altering the composition of the degradosome. Modulates RNA-binding and helicase activities of the degradosome. The polypeptide is Regulator of ribonuclease activity A (Edwardsiella ictaluri (strain 93-146)).